A 448-amino-acid polypeptide reads, in one-letter code: Inositol polyphosphate 5-phosphatase K (448 aa).

Residues 16–318 (IHVVTWNVAS…SDHKPVSGTF (303 aa)) form a catalytic region. A required for interaction with GPR78 and PAK1 region spans residues 318-448 (FDLELKPLVS…DPLGEAQPQI (131 aa)). The interval 321–448 (ELKPLVSAPL…DPLGEAQPQI (128 aa)) is required for ruffle localization.

Belongs to the inositol 1,4,5-trisphosphate 5-phosphatase type II family. In terms of assembly, interacts with GPR78; necessary for INPP5K localization at the endoplasmic reticulum. Interacts with PAK1; competes with GPR78. As to expression, ubiquitously expressed with highest levels in skeletal muscle, heart and kidney.

It is found in the endoplasmic reticulum. Its subcellular location is the cytoplasm. The catalysed reaction is 1D-myo-inositol 1,4,5-trisphosphate + H2O = 1D-myo-inositol 1,4-bisphosphate + phosphate. The enzyme catalyses 1D-myo-inositol 1,3,4,5-tetrakisphosphate + H2O = 1D-myo-inositol 1,3,4-trisphosphate + phosphate. It carries out the reaction a 1,2-diacyl-sn-glycero-3-phospho-(1D-myo-inositol-4,5-bisphosphate) + H2O = a 1,2-diacyl-sn-glycero-3-phospho-(1D-myo-inositol 4-phosphate) + phosphate. It catalyses the reaction a 1,2-diacyl-sn-glycero-3-phospho-(1D-myo-inositol-3,4,5-trisphosphate) + H2O = a 1,2-diacyl-sn-glycero-3-phospho-(1D-myo-inositol-3,4-bisphosphate) + phosphate. The catalysed reaction is 1,2-dioctanoyl-sn-glycero-3-phospho-(1D-myo-inositol-3,4,5-trisphosphate) + H2O = 1,2-dioctanoyl-sn-glycero-3-phospho-(1D-myo-inositol-3,4-bisphosphate) + phosphate. Inositol 5-phosphatase which acts on inositol 1,4,5-trisphosphate, inositol 1,3,4,5-tetrakisphosphate, phosphatidylinositol 4,5-bisphosphate and phosphatidylinositol 3,4,5-trisphosphate. Has 6-fold higher affinity for phosphatidylinositol 4,5-bisphosphate than for inositol 1,4,5-trisphosphate. Negatively regulates assembly of the actin cytoskeleton. Controls insulin-dependent glucose uptake among inositol 3,4,5-trisphosphate phosphatases; therefore, is the specific regulator for insulin signaling in skeletal muscle. This is Inositol polyphosphate 5-phosphatase K from Homo sapiens (Human).